We begin with the raw amino-acid sequence, 476 residues long: Aspartyl/glutamyl-tRNA(Asn/Gln) amidotransferase subunit B (476 aa).

This sequence belongs to the GatB/GatE family. GatB subfamily. Heterotrimer of A, B and C subunits.

The catalysed reaction is L-glutamyl-tRNA(Gln) + L-glutamine + ATP + H2O = L-glutaminyl-tRNA(Gln) + L-glutamate + ADP + phosphate + H(+). The enzyme catalyses L-aspartyl-tRNA(Asn) + L-glutamine + ATP + H2O = L-asparaginyl-tRNA(Asn) + L-glutamate + ADP + phosphate + 2 H(+). In terms of biological role, allows the formation of correctly charged Asn-tRNA(Asn) or Gln-tRNA(Gln) through the transamidation of misacylated Asp-tRNA(Asn) or Glu-tRNA(Gln) in organisms which lack either or both of asparaginyl-tRNA or glutaminyl-tRNA synthetases. The reaction takes place in the presence of glutamine and ATP through an activated phospho-Asp-tRNA(Asn) or phospho-Glu-tRNA(Gln). The polypeptide is Aspartyl/glutamyl-tRNA(Asn/Gln) amidotransferase subunit B (Solidesulfovibrio magneticus (strain ATCC 700980 / DSM 13731 / RS-1) (Desulfovibrio magneticus)).